The sequence spans 136 residues: Small ribosomal subunit protein bS6 (136 aa).

Positions 117–130 (EERSRSSRRQREDV) are enriched in basic and acidic residues. The segment at 117-136 (EERSRSSRRQREDVIEGVEL) is disordered.

The protein belongs to the bacterial ribosomal protein bS6 family.

Functionally, binds together with bS18 to 16S ribosomal RNA. This chain is Small ribosomal subunit protein bS6, found in Bartonella quintana (strain Toulouse) (Rochalimaea quintana).